The sequence spans 91 residues: UPF0367 protein cce_2199 (91 aa).

It belongs to the UPF0367 family.

The protein is UPF0367 protein cce_2199 of Crocosphaera subtropica (strain ATCC 51142 / BH68) (Cyanothece sp. (strain ATCC 51142)).